The chain runs to 605 residues: MKWITPASLILLLHFAASKALHENEFGIASTLDSSQCVTEKNVLSIATITFTQFVPEATEEEVNKMTSDVLAAMKKNSGDGCLESQLSVFLDEICHETELSNKYGLSGCCSQSGVERHQCLLARKKTAPASVPPFQFPEPAESCKAHEENRAVFMNRFIYEVSRRNPFMYAPAILSLAAQYDKVVLACCKADNKEECFQTKRASIAKELREGSMLNEHVCSVIRKFGSRNLQATTIIKLSQKLTEANFTEIQKLALDVAHIHEECCQGNSLECLQDGEKVMTYICSQQNILSSKIAECCKLPMIQLGFCIIHAENGVKPEGLSLNPSQFLGDRNFAQFSSEEKIMFMASFLHEYSRTHPNLPVSVILRIAKTYQEILEKCSQSGNLPGCQDNLEEELQKHIEESQALSKQSCALYQTLGDYKLQNLFLIGYTRKAPQLTSAELIDLTGKMVSIASTCCQLSEEKWSGCGEGMADIFIGHLCIRNEASPVNSGISHCCNSSYSNRRLCITSFLRDETYAPPPFSEDKFIFHKDLCQAQGKALQTMKQELLINLVKQKPELTEEQLAAVTADFSGLLEKCCKAQDQEVCFTEEGPKLISKTRDALGV.

The N-terminal stretch at 1 to 18 (MKWITPASLILLLHFAAS) is a signal peptide. Albumin domains are found at residues 19–207 (KALH…SIAK), 208–398 (ELRE…EELQ), and 399–597 (KHIE…KLIS). 8 cysteine pairs are disulfide-bonded: Cys-95-Cys-110, Cys-109-Cys-120, Cys-144-Cys-189, Cys-188-Cys-197, Cys-220-Cys-266, Cys-265-Cys-273, Cys-285-Cys-299, and Cys-298-Cys-309. Phosphoserine occurs at positions 107, 111, and 113. The N-linked (GlcNAc...) asparagine glycan is linked to Asn-247. The residue at position 340 (Ser-340) is a Phosphoserine. Cystine bridges form between Cys-380-Cys-389, Cys-412-Cys-458, Cys-457-Cys-468, Cys-481-Cys-497, Cys-496-Cys-507, Cys-534-Cys-579, and Cys-578-Cys-587. Ser-440 carries the post-translational modification Phosphoserine. Asn-498 is a glycosylation site (N-linked (GlcNAc...) asparagine).

It belongs to the ALB/AFP/VDB family. Post-translationally, glycosylated; contains two glycans. In terms of processing, sulfated. In terms of tissue distribution, plasma.

Its subcellular location is the secreted. In terms of biological role, binds estrogens, fatty acids and metals. The polypeptide is Alpha-fetoprotein (Afp) (Mus musculus (Mouse)).